A 118-amino-acid polypeptide reads, in one-letter code: MIKGVGIDSIEVERVKKIVAKGDSFAEKVLTPKEFAQYQKMKGKRKVEYLGGRFSLKESFSKAMGTGLGKYVGFQDVETLWDDLGHPVMTSTKFDGNIFPSITHDNHEIITFVVLEEK.

Positions 8 and 58 each coordinate Mg(2+).

Belongs to the P-Pant transferase superfamily. AcpS family. Requires Mg(2+) as cofactor.

It localises to the cytoplasm. It catalyses the reaction apo-[ACP] + CoA = holo-[ACP] + adenosine 3',5'-bisphosphate + H(+). Transfers the 4'-phosphopantetheine moiety from coenzyme A to a Ser of acyl-carrier-protein. The chain is Holo-[acyl-carrier-protein] synthase from Lactobacillus helveticus (strain DPC 4571).